The chain runs to 401 residues: N-acetyllactosaminide beta-1,6-N-acetylglucosaminyl-transferase (401 aa).

Over 1–7 (MPPSVRY) the chain is Cytoplasmic. A helical; Signal-anchor for type II membrane protein transmembrane segment spans residues 8–28 (FFIVSVTTVIVFIVLYVLSFG). Over 29–401 (GDQSYQKLNI…EIAIQPSWYF (373 aa)) the chain is Lumenal. N-linked (GlcNAc...) asparagine glycans are attached at residues N37, N255, N315, and N389.

It belongs to the glycosyltransferase 14 family.

It is found in the golgi apparatus membrane. The enzyme catalyses a beta-D-Gal-(1-&gt;4)-beta-D-GlcNAc-(1-&gt;3)-beta-D-Gal-(1-&gt;4)-beta-D-GlcNAc derivative + UDP-N-acetyl-alpha-D-glucosamine = a beta-D-Gal-(1-&gt;4)-beta-D-GlcNAc-(1-&gt;3)-[beta-D-GlcNAc-(1-&gt;6)]-beta-D-Gal-(1-&gt;4)-N-acetyl-beta-D-glucosaminyl derivative + UDP + H(+). It participates in protein modification; protein glycosylation. Functionally, branching enzyme that converts linear into branched poly-N-acetyllactosaminoglycans. Introduces the blood group I antigen during embryonic development. It is closely associated with the development and maturation of erythroid cells. The sequence is that of N-acetyllactosaminide beta-1,6-N-acetylglucosaminyl-transferase (Gcnt2) from Mus musculus (Mouse).